We begin with the raw amino-acid sequence, 569 residues long: Glutamyl-tRNA reductase (569 aa).

Substrate-binding positions include 49–52, Ser-109, 114–116, and Gln-120; these read TCNR and EGQ. Cys-50 serves as the catalytic Nucleophile. 192–197 serves as a coordination point for NADP(+); it reads GAGSMS. The interval 284-397 is insert; that stretch reads PVAVREETPA…VEAPRPAPAL (114 aa). The segment at 546–569 is disordered; that stretch reads AAVSRADDRDTSDSTENAKNRGRE. Basic and acidic residues predominate over residues 550-569; sequence RADDRDTSDSTENAKNRGRE.

This sequence belongs to the glutamyl-tRNA reductase family. Homodimer.

The enzyme catalyses (S)-4-amino-5-oxopentanoate + tRNA(Glu) + NADP(+) = L-glutamyl-tRNA(Glu) + NADPH + H(+). It participates in porphyrin-containing compound metabolism; protoporphyrin-IX biosynthesis; 5-aminolevulinate from L-glutamyl-tRNA(Glu): step 1/2. Functionally, catalyzes the NADPH-dependent reduction of glutamyl-tRNA(Glu) to glutamate 1-semialdehyde (GSA). In Streptomyces avermitilis (strain ATCC 31267 / DSM 46492 / JCM 5070 / NBRC 14893 / NCIMB 12804 / NRRL 8165 / MA-4680), this protein is Glutamyl-tRNA reductase.